A 755-amino-acid polypeptide reads, in one-letter code: Xaa-Pro dipeptidyl-peptidase (755 aa).

Catalysis depends on charge relay system residues serine 348, aspartate 468, and histidine 498.

This sequence belongs to the peptidase S15 family. Homodimer.

The protein localises to the cytoplasm. It carries out the reaction Hydrolyzes Xaa-Pro-|- bonds to release unblocked, N-terminal dipeptides from substrates including Ala-Pro-|-p-nitroanilide and (sequentially) Tyr-Pro-|-Phe-Pro-|-Gly-Pro-|-Ile.. Functionally, removes N-terminal dipeptides sequentially from polypeptides having unsubstituted N-termini provided that the penultimate residue is proline. The protein is Xaa-Pro dipeptidyl-peptidase of Streptococcus thermophilus (strain ATCC BAA-491 / LMD-9).